We begin with the raw amino-acid sequence, 155 residues long: 17.6 kDa class I heat shock protein 1 (155 aa).

Positions 39–154 (SSSAIANARV…KAQVKSIDIS (116 aa)) constitute a sHSP domain.

The protein belongs to the small heat shock protein (HSP20) family. In terms of assembly, forms oligomeric structures. Binds to AKR2A.

The protein localises to the cytoplasm. Functionally, possesses chaperone activity. In Arabidopsis thaliana (Mouse-ear cress), this protein is 17.6 kDa class I heat shock protein 1 (HSP17.6A).